A 196-amino-acid chain; its full sequence is Protein GrpE (196 aa).

The segment at M1 to R40 is disordered.

The protein belongs to the GrpE family. In terms of assembly, homodimer.

The protein localises to the cytoplasm. Participates actively in the response to hyperosmotic and heat shock by preventing the aggregation of stress-denatured proteins, in association with DnaK and GrpE. It is the nucleotide exchange factor for DnaK and may function as a thermosensor. Unfolded proteins bind initially to DnaJ; upon interaction with the DnaJ-bound protein, DnaK hydrolyzes its bound ATP, resulting in the formation of a stable complex. GrpE releases ADP from DnaK; ATP binding to DnaK triggers the release of the substrate protein, thus completing the reaction cycle. Several rounds of ATP-dependent interactions between DnaJ, DnaK and GrpE are required for fully efficient folding. In Salmonella enteritidis PT4 (strain P125109), this protein is Protein GrpE.